The primary structure comprises 371 residues: Lipoyl synthase, mitochondrial (371 aa).

The N-terminal 24 residues, 1 to 24, are a transit peptide targeting the mitochondrion; the sequence is MLSRFKCSRLQLQKRAISVTKATT. Polar residues predominate over residues 20 to 29; it reads TKATTTTASQ. The segment at 20 to 42 is disordered; sequence TKATTTTASQPKRRRTTTFSDAL. Positions 107, 112, 118, 138, 142, 145, and 353 each coordinate [4Fe-4S] cluster. Positions 121–342 constitute a Radical SAM core domain; sequence GGDSSKATAT…RDKALELGFL (222 aa).

It belongs to the radical SAM superfamily. Lipoyl synthase family. [4Fe-4S] cluster serves as cofactor.

It localises to the mitochondrion. It carries out the reaction [[Fe-S] cluster scaffold protein carrying a second [4Fe-4S](2+) cluster] + N(6)-octanoyl-L-lysyl-[protein] + 2 oxidized [2Fe-2S]-[ferredoxin] + 2 S-adenosyl-L-methionine + 4 H(+) = [[Fe-S] cluster scaffold protein] + N(6)-[(R)-dihydrolipoyl]-L-lysyl-[protein] + 4 Fe(3+) + 2 hydrogen sulfide + 2 5'-deoxyadenosine + 2 L-methionine + 2 reduced [2Fe-2S]-[ferredoxin]. Its pathway is protein modification; protein lipoylation via endogenous pathway; protein N(6)-(lipoyl)lysine from octanoyl-[acyl-carrier-protein]: step 2/2. In terms of biological role, catalyzes the radical-mediated insertion of two sulfur atoms into the C-6 and C-8 positions of the octanoyl moiety bound to the lipoyl domains of lipoate-dependent enzymes, thereby converting the octanoylated domains into lipoylated derivatives. The protein is Lipoyl synthase, mitochondrial of Lachancea thermotolerans (strain ATCC 56472 / CBS 6340 / NRRL Y-8284) (Yeast).